Consider the following 470-residue polypeptide: Argininosuccinate lyase (470 aa).

Belongs to the lyase 1 family. Argininosuccinate lyase subfamily.

The protein resides in the cytoplasm. The catalysed reaction is 2-(N(omega)-L-arginino)succinate = fumarate + L-arginine. It participates in amino-acid biosynthesis; L-arginine biosynthesis; L-arginine from L-ornithine and carbamoyl phosphate: step 3/3. In Leptospira borgpetersenii serovar Hardjo-bovis (strain L550), this protein is Argininosuccinate lyase.